A 340-amino-acid chain; its full sequence is Oxygen-dependent coproporphyrinogen-III oxidase (340 aa).

The span at 1–14 (MTVSPTTQPQTNHS) shows a compositional bias: polar residues. The disordered stretch occupies residues 1–22 (MTVSPTTQPQTNHSLPPADAKQ). S109 serves as a coordination point for substrate. Positions 113 and 123 each coordinate a divalent metal cation. H123 (proton donor) is an active-site residue. 125 to 127 (NYR) serves as a coordination point for substrate. Residues H157 and H187 each contribute to the a divalent metal cation site. Residues 278–313 (YVEFNLVYDRGTIFGLQTNGRTESILMSLPPLVRWQ) are important for dimerization. 296-298 (NGR) is a substrate binding site.

Belongs to the aerobic coproporphyrinogen-III oxidase family. As to quaternary structure, homodimer. Requires a divalent metal cation as cofactor.

It is found in the cytoplasm. It carries out the reaction coproporphyrinogen III + O2 + 2 H(+) = protoporphyrinogen IX + 2 CO2 + 2 H2O. It functions in the pathway porphyrin-containing compound metabolism; protoporphyrin-IX biosynthesis; protoporphyrinogen-IX from coproporphyrinogen-III (O2 route): step 1/1. Functionally, involved in the heme and chlorophyll biosynthesis. Catalyzes the aerobic oxidative decarboxylation of propionate groups of rings A and B of coproporphyrinogen-III to yield the vinyl groups in protoporphyrinogen-IX. This Synechocystis sp. (strain ATCC 27184 / PCC 6803 / Kazusa) protein is Oxygen-dependent coproporphyrinogen-III oxidase.